Reading from the N-terminus, the 417-residue chain is Lipoyl synthase, mitochondrial (417 aa).

Residues 1 to 30 constitute a mitochondrion transit peptide; it reads MATSIPRSRCFLTSSTLKVVPRSRTPLRSF. Positions 23–62 are disordered; that stretch reads SRTPLRSFATTSDTPQTSVPEAPGKRSRPPTSFSDTLNAG. Polar residues-rich tracts occupy residues 30-41 and 51-61; these read FATTSDTPQTSV and PPTSFSDTLNA. [4Fe-4S] cluster is bound by residues Cys-132, Cys-137, Cys-143, Cys-163, Cys-167, Cys-170, and Ser-378. The region spanning 146 to 367 is the Radical SAM core domain; sequence GSSKSAATAT…RQRALDMGFL (222 aa).

The protein belongs to the radical SAM superfamily. Lipoyl synthase family. Requires [4Fe-4S] cluster as cofactor.

It localises to the mitochondrion. It catalyses the reaction [[Fe-S] cluster scaffold protein carrying a second [4Fe-4S](2+) cluster] + N(6)-octanoyl-L-lysyl-[protein] + 2 oxidized [2Fe-2S]-[ferredoxin] + 2 S-adenosyl-L-methionine + 4 H(+) = [[Fe-S] cluster scaffold protein] + N(6)-[(R)-dihydrolipoyl]-L-lysyl-[protein] + 4 Fe(3+) + 2 hydrogen sulfide + 2 5'-deoxyadenosine + 2 L-methionine + 2 reduced [2Fe-2S]-[ferredoxin]. It participates in protein modification; protein lipoylation via endogenous pathway; protein N(6)-(lipoyl)lysine from octanoyl-[acyl-carrier-protein]: step 2/2. Catalyzes the radical-mediated insertion of two sulfur atoms into the C-6 and C-8 positions of the octanoyl moiety bound to the lipoyl domains of lipoate-dependent enzymes, thereby converting the octanoylated domains into lipoylated derivatives. The sequence is that of Lipoyl synthase, mitochondrial from Pyrenophora tritici-repentis (strain Pt-1C-BFP) (Wheat tan spot fungus).